We begin with the raw amino-acid sequence, 332 residues long: MKASLPWSVVWRAQSNYVRLRRVLKLCELWLLLVGSGLNAKLPLEEDVDFINEYVGLHNELRGTVFPPGVNLRFMTWDVALSRTARAWGKKCMYSRNTHLDKLHESHPVFTEIGENMWVGPVEDFTVTTAIRSWHEERKSYSYLNDTCVEDQNCSHYIQLVWDSSYKVGCAVTSCARAGGFTHAALFICNYAPGGTLTRRPYQAGQFCSRCGPGDQCTDYLCSNTVRDEATYYQFWYPPWEKPRPVVCNPMCIFILFLRVASLLLCVIVVLIVQSRFPVILMETPTIISAEEEGKTEVEIVMEEGEGEGEGGEGEGEGEEKEEEEMLEEDEQ.

The 135-residue stretch at 57–191 (LHNELRGTVF…THAALFICNY (135 aa)) folds into the SCP domain. Asparagine 145 carries N-linked (GlcNAc...) asparagine glycosylation. Residues 253-273 (IFILFLRVASLLLCVIVVLIV) traverse the membrane as a helical segment. A disordered region spans residues 293-332 (EGKTEVEIVMEEGEGEGEGGEGEGEGEEKEEEEMLEEDEQ). The segment covering 300–332 (IVMEEGEGEGEGGEGEGEGEEKEEEEMLEEDEQ) has biased composition (acidic residues).

It belongs to the CRISP family.

The protein localises to the membrane. The chain is GLIPR1-like protein 2 (Glipr1l2) from Mus musculus (Mouse).